A 228-amino-acid chain; its full sequence is Sec-independent protein translocase protein TatB (228 aa).

A helical transmembrane segment spans residues 1 to 21 (MFDFGLGELIFVGIIALIVLG). 2 disordered regions span residues 106 to 164 (TPAD…TDKD) and 196 to 228 (VPHTTSLRKQAINRKRDFRPKHRAKPKLRVRKS). The segment covering 135 to 151 (PSERSDTSAETLGDDRQ) has biased composition (basic and acidic residues). Residues 206–228 (AINRKRDFRPKHRAKPKLRVRKS) are compositionally biased toward basic residues.

This sequence belongs to the TatB family. As to quaternary structure, the Tat system comprises two distinct complexes: a TatABC complex, containing multiple copies of TatA, TatB and TatC subunits, and a separate TatA complex, containing only TatA subunits. Substrates initially bind to the TatABC complex, which probably triggers association of the separate TatA complex to form the active translocon.

The protein resides in the cell inner membrane. In terms of biological role, part of the twin-arginine translocation (Tat) system that transports large folded proteins containing a characteristic twin-arginine motif in their signal peptide across membranes. Together with TatC, TatB is part of a receptor directly interacting with Tat signal peptides. TatB may form an oligomeric binding site that transiently accommodates folded Tat precursor proteins before their translocation. The chain is Sec-independent protein translocase protein TatB from Neisseria gonorrhoeae (strain ATCC 700825 / FA 1090).